The primary structure comprises 223 residues: Protein-L-isoaspartate O-methyltransferase (223 aa).

Ser-70 is an active-site residue.

This sequence belongs to the methyltransferase superfamily. L-isoaspartyl/D-aspartyl protein methyltransferase family.

Its subcellular location is the cytoplasm. It catalyses the reaction [protein]-L-isoaspartate + S-adenosyl-L-methionine = [protein]-L-isoaspartate alpha-methyl ester + S-adenosyl-L-homocysteine. In terms of biological role, catalyzes the methyl esterification of L-isoaspartyl residues in peptides and proteins that result from spontaneous decomposition of normal L-aspartyl and L-asparaginyl residues. It plays a role in the repair and/or degradation of damaged proteins. In Saccharophagus degradans (strain 2-40 / ATCC 43961 / DSM 17024), this protein is Protein-L-isoaspartate O-methyltransferase.